The chain runs to 294 residues: 2,2',3-trihydroxybiphenyl dioxygenase (294 aa).

VOC domains lie at 7–120 (GYLI…LYVE) and 144–264 (GLGH…LGFG). Residues H147, H209, and E260 each contribute to the Fe cation site.

Belongs to the extradiol ring-cleavage dioxygenase family. As to quaternary structure, monomer. It depends on Fe(2+) as a cofactor.

It functions in the pathway xenobiotic degradation; dibenzo-p-dioxin degradation; 2-hydroxymuconate and catechol from dibenzo-p-dioxin: step 2/3. The protein operates within xenobiotic degradation; dibenzofuran degradation; 2-hydroxy-2,4-pentadienoate and salicylate from dibenzofuran: step 2/3. Its function is as follows. Responsible for meta-cleavage of the first aromatic ring of 2,2',3-trihydroxybiphenyl and 2,3-dihydroxybiphenyl. 2,2',3-trihydroxydiphenyl ether, catechol, 3-methylcatechol, and 4-methylcatechol are oxidized less efficiently and 3,4-dihydroxybiphenyl is oxidized considerably less efficiently. The protein is 2,2',3-trihydroxybiphenyl dioxygenase (dbfB) of Sphingomonas paucimobilis (Pseudomonas paucimobilis).